Consider the following 292-residue polypeptide: Small ribosomal subunit protein uS3 (292 aa).

A KH type-2 domain is found at 39–110 (IRLEIMKFLK…KISIKIKEVK (72 aa)). The disordered stretch occupies residues 247 to 268 (KANERQSRAALNKKDGLSKDET).

This sequence belongs to the universal ribosomal protein uS3 family. Part of the 30S ribosomal subunit. Forms a tight complex with proteins S10 and S14.

Functionally, binds the lower part of the 30S subunit head. Binds mRNA in the 70S ribosome, positioning it for translation. This Borrelia garinii subsp. bavariensis (strain ATCC BAA-2496 / DSM 23469 / PBi) (Borreliella bavariensis) protein is Small ribosomal subunit protein uS3.